The primary structure comprises 194 residues: Peptidyl-tRNA hydrolase (194 aa).

Tyr-17 is a tRNA binding site. His-22 acts as the Proton acceptor in catalysis. TRNA contacts are provided by Phe-68, Asn-70, and Asn-116.

The protein belongs to the PTH family. In terms of assembly, monomer.

The protein localises to the cytoplasm. It carries out the reaction an N-acyl-L-alpha-aminoacyl-tRNA + H2O = an N-acyl-L-amino acid + a tRNA + H(+). In terms of biological role, hydrolyzes ribosome-free peptidyl-tRNAs (with 1 or more amino acids incorporated), which drop off the ribosome during protein synthesis, or as a result of ribosome stalling. Catalyzes the release of premature peptidyl moieties from peptidyl-tRNA molecules trapped in stalled 50S ribosomal subunits, and thus maintains levels of free tRNAs and 50S ribosomes. The protein is Peptidyl-tRNA hydrolase of Glaesserella parasuis serovar 5 (strain SH0165) (Haemophilus parasuis).